We begin with the raw amino-acid sequence, 401 residues long: Phosphoglycerate kinase (401 aa).

Substrate is bound by residues 21-23, Arg-36, 59-62, Arg-119, and Arg-160; these read DFN and HLGR. ATP contacts are provided by residues Lys-212, Glu-330, and 357–360; that span reads GGDS.

It belongs to the phosphoglycerate kinase family. Monomer.

It is found in the cytoplasm. The catalysed reaction is (2R)-3-phosphoglycerate + ATP = (2R)-3-phospho-glyceroyl phosphate + ADP. The protein operates within carbohydrate degradation; glycolysis; pyruvate from D-glyceraldehyde 3-phosphate: step 2/5. This Limosilactobacillus reuteri subsp. reuteri (strain JCM 1112) (Lactobacillus reuteri) protein is Phosphoglycerate kinase.